The following is a 92-amino-acid chain: Small ribosomal subunit protein uS19 (92 aa).

This sequence belongs to the universal ribosomal protein uS19 family.

Functionally, protein S19 forms a complex with S13 that binds strongly to the 16S ribosomal RNA. This is Small ribosomal subunit protein uS19 from Staphylococcus carnosus (strain TM300).